The sequence spans 292 residues: MAFMKKYLLPILGIFLAYYYYSANEEFRPEMLRGKRVIVTGASKGIGREMAYHLARMGAHVVVTARSEESLKKVVSRCLELGAASAHYVAGTMENMTFAEQFVAKAGELVGGLDMLILNHINYTPLRVFSNDIHLLRRSLEVNLLSYVVLSTAALPMLKQTSGSIVVVSSVAGKIACPLAAAYSASKFALDGFFSSLRTEYEATKVNVSITLCILGLIDTDTAMKAVAGIYNAEASPKEECALEIIKGGALRQDEVYYDNSILTSLLLKNPGRKIMEFLSLKKYNMERFINN.

Topologically, residues 1-7 (MAFMKKY) are cytoplasmic. A helical; Signal-anchor for type II membrane protein transmembrane segment spans residues 8 to 24 (LLPILGIFLAYYYYSAN). Over 25–292 (EEFRPEMLRG…KYNMERFINN (268 aa)) the chain is Lumenal. Residues 41 to 67 (GASKGIGREMAYHLARMGAHVVVTARS) and 92 to 93 (TM) each bind NADP(+). An N-linked (GlcNAc...) asparagine glycan is attached at Asn-95. 119 to 121 (NHI) provides a ligand contact to NADP(+). Ser-170 lines the substrate pocket. The active-site Proton acceptor is the Tyr-183. 183-187 (YSASK) is an NADP(+) binding site. N-linked (GlcNAc...) asparagine glycosylation occurs at Asn-207. NADP(+) is bound by residues 216-222 (GLIDTDT) and 218-222 (IDTDT).

The protein belongs to the short-chain dehydrogenases/reductases (SDR) family. As to quaternary structure, homodimer. As to expression, liver, kidney, lung, hypothalamus, anterior pituitary and placenta.

It localises to the endoplasmic reticulum membrane. It catalyses the reaction an 11beta-hydroxysteroid + NADP(+) = an 11-oxosteroid + NADPH + H(+). The catalysed reaction is corticosterone + NADP(+) = 11-dehydrocorticosterone + NADPH + H(+). The enzyme catalyses cortisone + NADPH + H(+) = cortisol + NADP(+). It carries out the reaction a 7beta-hydroxysteroid + NADP(+) = a 7-oxosteroid + NADPH + H(+). It catalyses the reaction 7-oxocholesterol + NADPH + H(+) = 7beta-hydroxycholesterol + NADP(+). The catalysed reaction is chenodeoxycholate + NADP(+) = 7-oxolithocholate + NADPH + H(+). The enzyme catalyses 7-oxolithocholate + NADPH + H(+) = ursodeoxycholate + NADP(+). It carries out the reaction glycochenodeoxycholate + NADP(+) = 7-oxoglycolithocholate + NADPH + H(+). It catalyses the reaction taurochenodeoxycholate + NADP(+) = 7-oxotaurolithocholate + NADPH + H(+). The catalysed reaction is tauroursodeoxycholate + NADP(+) = 7-oxotaurolithocholate + NADPH + H(+). The enzyme catalyses glycoursodeoxycholate + NADP(+) = 7-oxoglycolithocholate + NADPH + H(+). It carries out the reaction 7-oxopregnenolone + NADPH + H(+) = 7beta-hydroxypregnenolone + NADP(+). It catalyses the reaction 3beta,7alpha-dihydroxyandrost-5-en-17-one + NADP(+) = 3beta-hydroxy-5-androstene-7,17-dione + NADPH + H(+). The catalysed reaction is 3beta-hydroxy-5-androstene-7,17-dione + NADPH + H(+) = 3beta,7beta-dihydroxyandrost-5-en-17-one + NADP(+). The enzyme catalyses 3beta-hydroxy-5alpha-androstane-7,17-dione + NADPH + H(+) = 3beta,7beta-dihydroxy-5alpha-androstan-17-one + NADP(+). Functionally, controls the reversible conversion of biologically active glucocorticoids such as cortisone to cortisol, and 11-dehydrocorticosterone to corticosterone in the presence of NADP(H). Participates in the corticosteroid receptor-mediated anti-inflammatory response, as well as metabolic and homeostatic processes. Plays a role in the secretion of aqueous humor in the eye, maintaining a normotensive, intraocular environment. Bidirectional in vitro, predominantly functions as a reductase in vivo, thereby increasing the concentration of active glucocorticoids. It has broad substrate specificity, besides glucocorticoids, it accepts other steroid and sterol substrates. Interconverts 7-oxo- and 7-hydroxy-neurosteroids such as 7-oxopregnenolone and 7beta-hydroxypregnenolone, 7-oxodehydroepiandrosterone (3beta-hydroxy-5-androstene-7,17-dione) and 7beta-hydroxydehydroepiandrosterone (3beta,7beta-dihydroxyandrost-5-en-17-one), among others. Catalyzes the stereo-specific conversion of the major dietary oxysterol, 7-ketocholesterol (7-oxocholesterol), into the more polar 7-beta-hydroxycholesterol metabolite. 7-oxocholesterol is one of the most important oxysterols, it participates in several events such as induction of apoptosis, accumulation in atherosclerotic lesions, lipid peroxidation, and induction of foam cell formation. Mediates the 7-oxo reduction of 7-oxolithocholate mainly to chenodeoxycholate, and to a lesser extent to ursodeoxycholate, both in its free form and when conjugated to glycine or taurine, providing a link between glucocorticoid activation and bile acid metabolism. Catalyzes the synthesis of 7-beta-25-dihydroxycholesterol from 7-oxo-25-hydroxycholesterol in vitro, which acts as a ligand for the G-protein-coupled receptor (GPCR) Epstein-Barr virus-induced gene 2 (EBI2) and may thereby regulate immune cell migration. The chain is 11-beta-hydroxysteroid dehydrogenase 1 (HSD11B1) from Ovis aries (Sheep).